Here is a 132-residue protein sequence, read N- to C-terminus: Ribosome-binding factor A (132 aa).

Positions 113 to 132 (EANSTRAKDDDEADTPAKDD) are disordered.

Belongs to the RbfA family. As to quaternary structure, monomer. Binds 30S ribosomal subunits, but not 50S ribosomal subunits or 70S ribosomes.

The protein localises to the cytoplasm. One of several proteins that assist in the late maturation steps of the functional core of the 30S ribosomal subunit. Associates with free 30S ribosomal subunits (but not with 30S subunits that are part of 70S ribosomes or polysomes). Required for efficient processing of 16S rRNA. May interact with the 5'-terminal helix region of 16S rRNA. The chain is Ribosome-binding factor A from Burkholderia cenocepacia (strain HI2424).